The primary structure comprises 102 residues: Carboxysome shell protein CcmK2 (102 aa).

Residues alanine 4–proline 90 enclose the BMC domain.

Belongs to the bacterial microcompartments protein family. CcmK subfamily. As to quaternary structure, homohexamer. Stacked hexamers, with the concave faces together, have also been crystallized. Interacts preferentially with itself, then with CcmK1 and CcmK4a in vitro. May interact with CcmL, this occurs at very high CcmK2 concentrations. Interacts with CcmN and CcmO in the carboxysome.

The protein localises to the carboxysome. Probably the major shell protein of the carboxysome, a polyhedral inclusion where RuBisCO (ribulose bisphosphate carboxylase, rbcL-rbcS) is sequestered. Assembles into hexamers which make sheets that form the facets of the polyhedral carboxysome. The hexamer central pore probably regulates metabolite flux. In Thermosynechococcus vestitus (strain NIES-2133 / IAM M-273 / BP-1), this protein is Carboxysome shell protein CcmK2.